Reading from the N-terminus, the 261-residue chain is Large ribosomal subunit protein uL2 (261 aa).

The tract at residues 207–233 (VEHPHGGGNHQHIGKASTVKRGTPPGR) is disordered.

This sequence belongs to the universal ribosomal protein uL2 family.

It localises to the cytoplasm. The sequence is that of Large ribosomal subunit protein uL2 (RpL8) from Aedes albopictus (Asian tiger mosquito).